A 475-amino-acid polypeptide reads, in one-letter code: 3-isopropylmalate dehydratase large subunit (475 aa).

Cys-348, Cys-408, and Cys-411 together coordinate [4Fe-4S] cluster.

Belongs to the aconitase/IPM isomerase family. LeuC type 1 subfamily. In terms of assembly, heterodimer of LeuC and LeuD. Requires [4Fe-4S] cluster as cofactor.

The catalysed reaction is (2R,3S)-3-isopropylmalate = (2S)-2-isopropylmalate. It participates in amino-acid biosynthesis; L-leucine biosynthesis; L-leucine from 3-methyl-2-oxobutanoate: step 2/4. Its function is as follows. Catalyzes the isomerization between 2-isopropylmalate and 3-isopropylmalate, via the formation of 2-isopropylmaleate. This is 3-isopropylmalate dehydratase large subunit from Acidobacterium capsulatum (strain ATCC 51196 / DSM 11244 / BCRC 80197 / JCM 7670 / NBRC 15755 / NCIMB 13165 / 161).